The primary structure comprises 194 residues: HTH-type transcriptional regulator BetI (194 aa).

In terms of domain architecture, HTH tetR-type spans 8-68; that stretch reads EIRRAQLIDA…ATMRHVLRDL (61 aa). Positions 31-50 form a DNA-binding region, H-T-H motif; sequence TLASVAQRANISTGIVSHYF.

It participates in amine and polyamine biosynthesis; betaine biosynthesis via choline pathway [regulation]. Functionally, repressor involved in the biosynthesis of the osmoprotectant glycine betaine. It represses transcription of the choline transporter BetT and the genes of BetAB involved in the synthesis of glycine betaine. This chain is HTH-type transcriptional regulator BetI, found in Burkholderia cenocepacia (strain ATCC BAA-245 / DSM 16553 / LMG 16656 / NCTC 13227 / J2315 / CF5610) (Burkholderia cepacia (strain J2315)).